The following is a 750-amino-acid chain: E3 ubiquitin-protein ligase rfwd3.S (750 aa).

The interval 92–206 (RQAAEQRSSV…GAAPPAEPAP (115 aa)) is disordered. Residues 105 to 116 (RVQRRSTRRHQR) are compositionally biased toward basic residues. A compositionally biased stretch (polar residues) spans 122 to 144 (TAGTSSRAALSNFFQINRTQGVA). Over residues 168-181 (SSDETVELSEEEEG) the composition is skewed to acidic residues. The RING-type; degenerate zinc finger occupies 263 to 307 (CAICFEPWTNAGQHRLSALRCGHLFGFTCIERWLKGGAAKCPQCN). A compositionally biased stretch (low complexity) spans 387-405 (TSMQASSSRSTISGSLSSS). The disordered stretch occupies residues 387–406 (TSMQASSSRSTISGSLSSSQ). WD repeat units lie at residues 470–510 (IHSK…VVQT), 512–552 (NTGR…NCVQ), and 558–603 (GSRC…YRPH).

Requires [4Fe-4S] cluster as cofactor.

The protein localises to the nucleus. It is found in the PML body. It localises to the cytoplasm. The catalysed reaction is S-ubiquitinyl-[E2 ubiquitin-conjugating enzyme]-L-cysteine + [acceptor protein]-L-lysine = [E2 ubiquitin-conjugating enzyme]-L-cysteine + N(6)-ubiquitinyl-[acceptor protein]-L-lysine.. The protein operates within protein modification; protein ubiquitination. In terms of biological role, E3 ubiquitin-protein ligase required for the repair of DNA interstrand cross-links (ICL) in response to DNA damage. Plays a key role in RPA-mediated DNA damage signaling and repair. Required to translesion DNA synthesis across DNA-protein cross-link adducts by catalyzing ubiquitination of proteins on single-stranded DNA (ssDNA). Mediates ubiquitination of the hmces DNA-protein cross-link, possibly promoting its degradation. The chain is E3 ubiquitin-protein ligase rfwd3.S (rfwd3.S) from Xenopus laevis (African clawed frog).